A 59-amino-acid polypeptide reads, in one-letter code: MRCLPVFVILLLLIASAPSVDAQLKTKDDVPLASFHDNAKGTQHKRIINWCCLVFYQCC.

Positions 1–22 (MRCLPVFVILLLLIASAPSVDA) are cleaved as a signal peptide. Residues 23 to 44 (QLKTKDDVPLASFHDNAKGTQH) constitute a propeptide that is removed on maturation.

It belongs to the conotoxin T superfamily. Contains 2 disulfide bonds that can be either 'C1-C3, C2-C4' or 'C1-C4, C2-C3', since these disulfide connectivities have been observed for conotoxins with cysteine framework V (for examples, see AC P0DQQ7 and AC P81755). As to expression, expressed by the venom duct.

The protein resides in the secreted. The protein is Conotoxin Sr5.4 of Conus spurius (Alphabet cone).